Here is a 153-residue protein sequence, read N- to C-terminus: E3 ubiquitin-protein ligase AIRP1 (153 aa).

An RING-type; atypical zinc finger spans residues 104-145 (CPICLEEYEIDNPKLLTKCGHDFHLACILAWMERSEACPVCD).

Its subcellular location is the cytoplasm. It is found in the cytosol. The catalysed reaction is S-ubiquitinyl-[E2 ubiquitin-conjugating enzyme]-L-cysteine + [acceptor protein]-L-lysine = [E2 ubiquitin-conjugating enzyme]-L-cysteine + N(6)-ubiquitinyl-[acceptor protein]-L-lysine.. Functionally, possesses E3 ubiquitin-protein ligase activity in vitro when associated with the E2 enzyme UBC8 in vitro. Plays combinatory roles with AIRP2 in the positive regulation of the abscisic acid-mediated drought stress response. This is E3 ubiquitin-protein ligase AIRP1 from Arabidopsis thaliana (Mouse-ear cress).